The following is a 120-amino-acid chain: Large ribosomal subunit protein uL18 (120 aa).

Part of the 50S ribosomal subunit; part of the 5S rRNA/L5/L18/L25 subcomplex. Contacts the 5S and 23S rRNAs.

Its function is as follows. This is one of the proteins that bind and probably mediate the attachment of the 5S RNA into the large ribosomal subunit, where it forms part of the central protuberance. The sequence is that of Large ribosomal subunit protein uL18 from Rhodopseudomonas palustris (strain ATCC BAA-98 / CGA009).